The following is a 640-amino-acid chain: Threonine--tRNA ligase (640 aa).

Residues 1-61 (MPTITLPDGS…ENDASLQIIT (61 aa)) enclose the TGS domain. Positions 242–533 (DHRKIGKRLG…LIEHYEGAFP (292 aa)) are catalytic. The Zn(2+) site is built by Cys-333, His-384, and His-510.

Belongs to the class-II aminoacyl-tRNA synthetase family. As to quaternary structure, homodimer. Zn(2+) is required as a cofactor.

It is found in the cytoplasm. The catalysed reaction is tRNA(Thr) + L-threonine + ATP = L-threonyl-tRNA(Thr) + AMP + diphosphate + H(+). Catalyzes the attachment of threonine to tRNA(Thr) in a two-step reaction: L-threonine is first activated by ATP to form Thr-AMP and then transferred to the acceptor end of tRNA(Thr). Also edits incorrectly charged L-seryl-tRNA(Thr). In Pseudomonas syringae pv. syringae (strain B728a), this protein is Threonine--tRNA ligase.